We begin with the raw amino-acid sequence, 457 residues long: uncharacterized protein (457 aa).

The region spanning 6–64 (PVHKGEVLDVTIMDLTYQGMGVAKVDNYPIFIENALPEEKITVKVTKTTKNFAFGDVEK) is the TRAM domain. The S-adenosyl-L-methionine site is built by Gln287, Tyr316, Glu337, and Asp385. The active-site Nucleophile is the Cys412.

Belongs to the class I-like SAM-binding methyltransferase superfamily. RNA M5U methyltransferase family.

This is an uncharacterized protein from Lactiplantibacillus plantarum (strain ATCC BAA-793 / NCIMB 8826 / WCFS1) (Lactobacillus plantarum).